Reading from the N-terminus, the 855-residue chain is DNA mismatch repair protein MutS (855 aa).

615–622 (GPNMGGKS) contributes to the ATP binding site.

Belongs to the DNA mismatch repair MutS family.

This protein is involved in the repair of mismatches in DNA. It is possible that it carries out the mismatch recognition step. This protein has a weak ATPase activity. The polypeptide is DNA mismatch repair protein MutS (Aliivibrio salmonicida (strain LFI1238) (Vibrio salmonicida (strain LFI1238))).